Here is a 200-residue protein sequence, read N- to C-terminus: Small ribosomal subunit protein uS4 (200 aa).

Residues 1-13 (MARYRGPKQKIAR) show a composition bias toward basic residues. Positions 1–44 (MARYRGPKQKIARRFKEPIFGPSKALERKPYPPGQHGQSRRRRE) are disordered. Residues 92–154 (ARLDNTVFRM…SQDLEVIQTN (63 aa)) enclose the S4 RNA-binding domain.

The protein belongs to the universal ribosomal protein uS4 family. Part of the 30S ribosomal subunit. Contacts protein S5. The interaction surface between S4 and S5 is involved in control of translational fidelity.

Functionally, one of the primary rRNA binding proteins, it binds directly to 16S rRNA where it nucleates assembly of the body of the 30S subunit. With S5 and S12 plays an important role in translational accuracy. The sequence is that of Small ribosomal subunit protein uS4 from Salinibacter ruber (strain DSM 13855 / M31).